The sequence spans 272 residues: uncharacterized protein (272 aa).

A signal peptide spans Met1–Ala20. Residue Cys21 is the site of N-palmitoyl cysteine attachment. A lipid anchor (S-diacylglycerol cysteine) is attached at Cys21.

Belongs to the MG439/MG440 family.

Its subcellular location is the cell membrane. This is an uncharacterized protein from Mycoplasma genitalium (strain ATCC 33530 / DSM 19775 / NCTC 10195 / G37) (Mycoplasmoides genitalium).